Consider the following 86-residue polypeptide: Translation machinery-associated protein 10 (86 aa).

A phosphoserine mark is found at Ser-28 and Ser-79. The segment at 63 to 86 is disordered; the sequence is NKTRRGSNSQNNERRLSDLQQYHI.

Belongs to the STF2 family. In terms of assembly, associates with ribosomes.

The protein localises to the cytoplasm. It is found in the nucleus. In terms of biological role, may be involved in inhibition of the reverse ATPase reaction of mitochondrial F(1)F(0)-type ATP synthase. This chain is Translation machinery-associated protein 10, found in Saccharomyces cerevisiae (strain ATCC 204508 / S288c) (Baker's yeast).